The primary structure comprises 1799 residues: 1,3-beta-glucan synthase component FKS1 (1799 aa).

Residues 1-11 (MSYPNPPPPPK) are compositionally biased toward pro residues. A disordered region spans residues 1–136 (MSYPNPPPPP…SNAGHRPRDP (136 aa)). The segment covering 12–23 (GSASFSSSSSDP) has biased composition (low complexity). The span at 51 to 64 (GAGGAGVAPPGQGG) shows a compositional bias: gly residues. The span at 91 to 101 (ASESGWSQNEP) shows a compositional bias: polar residues. The next 16 membrane-spanning stretches (helical) occupy residues 431 to 451 (IWVL…PSIY), 470 to 490 (LGGF…FSYI), 504 to 524 (LIFL…IAFF), 530 to 550 (VALI…IAFA), 591 to 611 (FLLW…FLTL), 648 to 668 (VMFV…YVIW), 1268 to 1288 (NILV…LGTL), 1323 to 1343 (CIIS…VQEL), 1422 to 1442 (LVLL…YFWI), 1446 to 1466 (GLCV…DFII), 1527 to 1547 (IGEI…YLFI), 1563 to 1583 (IAII…TLFL), 1605 to 1625 (ALAH…LWFL), 1635 to 1655 (LGII…IAVF), 1704 to 1724 (DFIA…IPYF), and 1762 to 1782 (GLLY…PIIF).

It belongs to the glycosyltransferase 48 family. Component of the 1,3-beta-glucan synthase (GS) complex composed of a catalytic subunit FKS1 and a regulatory subunit RHO1.

Its subcellular location is the cell membrane. It catalyses the reaction [(1-&gt;3)-beta-D-glucosyl](n) + UDP-alpha-D-glucose = [(1-&gt;3)-beta-D-glucosyl](n+1) + UDP + H(+). Activated by magnesium ions. Inhibited by caspofungin and cilofungin. Functionally, catalytic subunit of the 1,3-beta-glucan synthase (GS) complex. Synthesizes 1,3-beta-glucan, a major structural component of the yeast cell wall. Involved in cell wall synthesis, maintenance and remodeling. This Cryptococcus neoformans var. grubii serotype A (strain H99 / ATCC 208821 / CBS 10515 / FGSC 9487) (Filobasidiella neoformans var. grubii) protein is 1,3-beta-glucan synthase component FKS1.